We begin with the raw amino-acid sequence, 294 residues long: Cytidine deaminase (294 aa).

CMP/dCMP-type deaminase domains lie at 48 to 168 (DEDA…FGPK) and 186 to 294 (LTGD…VLLG). Residue 89-91 (NME) coordinates substrate. Zn(2+) is bound at residue histidine 102. Glutamate 104 functions as the Proton donor in the catalytic mechanism. Zn(2+) is bound by residues cysteine 129 and cysteine 132.

It belongs to the cytidine and deoxycytidylate deaminase family. Homodimer. The cofactor is Zn(2+).

The catalysed reaction is cytidine + H2O + H(+) = uridine + NH4(+). It catalyses the reaction 2'-deoxycytidine + H2O + H(+) = 2'-deoxyuridine + NH4(+). In terms of biological role, this enzyme scavenges exogenous and endogenous cytidine and 2'-deoxycytidine for UMP synthesis. This chain is Cytidine deaminase, found in Salmonella enteritidis PT4 (strain P125109).